We begin with the raw amino-acid sequence, 73 residues long: MKADIHPVYEAIDATCSCGNVIKTRSTLAAPLSLDVCNECHPFYTGKQKMLDVGGRVDKFKSRFGAFGATKAK.

Zn(2+)-binding residues include Cys16, Cys18, Cys37, and Cys40.

The protein belongs to the bacterial ribosomal protein bL31 family. Type A subfamily. As to quaternary structure, part of the 50S ribosomal subunit. Requires Zn(2+) as cofactor.

In terms of biological role, binds the 23S rRNA. This is Large ribosomal subunit protein bL31 from Pseudomonas syringae pv. syringae (strain B728a).